The sequence spans 117 residues: UPF0251 protein DehaBAV1_0135 (117 aa).

It belongs to the UPF0251 family.

This Dehalococcoides mccartyi (strain ATCC BAA-2100 / JCM 16839 / KCTC 5957 / BAV1) protein is UPF0251 protein DehaBAV1_0135.